A 287-amino-acid polypeptide reads, in one-letter code: Probable endonuclease 4 (287 aa).

H69, H109, E144, D178, H181, H215, D228, H230, and E260 together coordinate Zn(2+).

Belongs to the AP endonuclease 2 family. Zn(2+) is required as a cofactor.

The catalysed reaction is Endonucleolytic cleavage to 5'-phosphooligonucleotide end-products.. In terms of biological role, endonuclease IV plays a role in DNA repair. It cleaves phosphodiester bonds at apurinic or apyrimidinic (AP) sites, generating a 3'-hydroxyl group and a 5'-terminal sugar phosphate. The protein is Probable endonuclease 4 of Thermotoga maritima (strain ATCC 43589 / DSM 3109 / JCM 10099 / NBRC 100826 / MSB8).